A 594-amino-acid polypeptide reads, in one-letter code: UvrABC system protein C (594 aa).

Positions 13 to 99 (HSSGVYQYFD…IKQLKPKYNI (87 aa)) constitute a GIY-YIG domain. Residues 205–240 (DKLIKELELKMERLSNNLRFEEALIYRDRIAKIQKI) form the UVR domain.

This sequence belongs to the UvrC family. In terms of assembly, interacts with UvrB in an incision complex.

It is found in the cytoplasm. In terms of biological role, the UvrABC repair system catalyzes the recognition and processing of DNA lesions. UvrC both incises the 5' and 3' sides of the lesion. The N-terminal half is responsible for the 3' incision and the C-terminal half is responsible for the 5' incision. The chain is UvrABC system protein C from Helicobacter pylori (strain Shi470).